A 485-amino-acid polypeptide reads, in one-letter code: Cysteine--tRNA ligase (485 aa).

Cys27 lines the Zn(2+) pocket. The 'HIGH' region signature appears at 29–39 (ITAYDLCHIGH). Cys208, His233, and Glu237 together coordinate Zn(2+). The 'KMSKS' region motif lies at 265 to 269 (KMSKS). Lys268 is an ATP binding site.

Belongs to the class-I aminoacyl-tRNA synthetase family. As to quaternary structure, monomer. Zn(2+) serves as cofactor.

The protein resides in the cytoplasm. It catalyses the reaction tRNA(Cys) + L-cysteine + ATP = L-cysteinyl-tRNA(Cys) + AMP + diphosphate. The chain is Cysteine--tRNA ligase from Maridesulfovibrio salexigens (strain ATCC 14822 / DSM 2638 / NCIMB 8403 / VKM B-1763) (Desulfovibrio salexigens).